The primary structure comprises 59 residues: uncharacterized protein (59 aa).

This is an uncharacterized protein from Caenorhabditis elegans.